Here is a 112-residue protein sequence, read N- to C-terminus: MNTYNINITKSALDHLNSISKLNSEDKLYIRIGIKQGGCSGLSYFMTYEKKSNISDNDLVYDYDNFTLVCDNKSILYLYGISLDYSSSLIDGGFKFLNPNAKQTCGCGKSFS.

3 residues coordinate Fe cation: cysteine 39, cysteine 105, and cysteine 107.

Belongs to the HesB/IscA family. Ycf83 subfamily.

The protein resides in the plastid. It is found in the chloroplast. This is an uncharacterized protein from Galdieria sulphuraria (Red alga).